Here is a 222-residue protein sequence, read N- to C-terminus: Protein THYLAKOID ASSEMBLY 8, chloroplastic (222 aa).

Residues Met-1–Arg-32 constitute a chloroplast transit peptide. 2 PPR repeats span residues Asp-115–Ser-149 and Asp-150–Ser-184.

This sequence belongs to the PPR family. P subfamily.

It localises to the plastid. The protein localises to the chloroplast thylakoid membrane. Essential protein required during embryogenesis. Mediates group II organellar RNA introns splicing (e.g. ycf3-2 and trnA). Binds weakly to specific RNA. Promotes the biogenesis of chloroplast thylakoid membranes. This Arabidopsis thaliana (Mouse-ear cress) protein is Protein THYLAKOID ASSEMBLY 8, chloroplastic.